A 255-amino-acid polypeptide reads, in one-letter code: Pimeloyl-[acyl-carrier protein] methyl ester esterase (255 aa).

The AB hydrolase-1 domain occupies 16-242 (LVLLHGWGMN…SSHAPFITEP (227 aa)). Substrate contacts are provided by residues Trp-22, 82-83 (SL), and 143-147 (FMALQ). Ser-82 serves as the catalytic Nucleophile. Catalysis depends on residues Asp-207 and His-235. His-235 serves as a coordination point for substrate.

It belongs to the AB hydrolase superfamily. Carboxylesterase BioH family. As to quaternary structure, monomer.

It localises to the cytoplasm. It catalyses the reaction 6-carboxyhexanoyl-[ACP] methyl ester + H2O = 6-carboxyhexanoyl-[ACP] + methanol + H(+). The protein operates within cofactor biosynthesis; biotin biosynthesis. In terms of biological role, the physiological role of BioH is to remove the methyl group introduced by BioC when the pimeloyl moiety is complete. It allows to synthesize pimeloyl-ACP via the fatty acid synthetic pathway through the hydrolysis of the ester bonds of pimeloyl-ACP esters. This is Pimeloyl-[acyl-carrier protein] methyl ester esterase from Vibrio vulnificus (strain CMCP6).